Reading from the N-terminus, the 155-residue chain is Ribosomal RNA large subunit methyltransferase H (155 aa).

Residues L73, G104, and 123–128 contribute to the S-adenosyl-L-methionine site; that span reads LSRMTF.

It belongs to the RNA methyltransferase RlmH family. In terms of assembly, homodimer.

Its subcellular location is the cytoplasm. It catalyses the reaction pseudouridine(1915) in 23S rRNA + S-adenosyl-L-methionine = N(3)-methylpseudouridine(1915) in 23S rRNA + S-adenosyl-L-homocysteine + H(+). Its function is as follows. Specifically methylates the pseudouridine at position 1915 (m3Psi1915) in 23S rRNA. This Methylococcus capsulatus (strain ATCC 33009 / NCIMB 11132 / Bath) protein is Ribosomal RNA large subunit methyltransferase H.